Consider the following 771-residue polypeptide: Solute carrier family 7 member 14 (771 aa).

Helical transmembrane passes span 58-78, 83-103, 130-150, 187-207, 216-236, and 251-271; these read LISL…SGLV, AGPG…LSGV, FVAF…TAAG, YPDL…ALGV, VLNV…FFFI, and WSGV…FDII. N-linked (GlcNAc...) asparagine glycosylation is present at asparagine 282. 5 consecutive transmembrane segments (helical) span residues 291–311, 336–356, 360–380, 384–404, and 407–427; these read ASLV…TLMV, FVVA…SLFP, VIYA…VSSY, PVVA…LVSL, and LIEM…VCVL. A phosphoserine mark is found at serine 465, serine 468, and serine 488. Transmembrane regions (helical) follow at residues 565-585, 596-616, 628-648, and 655-675; these read VTIC…FIIF, WAIL…FVIL, MAPC…YLML, and WIRF…YGIW. N-linked (GlcNAc...) asparagine glycosylation occurs at asparagine 676. Residues 712–771 are disordered; the sequence is TEGESQENWGGPAEDKGFYYQQMSDTQPNTRTSSKAKSKSKHKQNSEALIANDELDYSPE. Residues 732 to 743 show a composition bias toward polar residues; it reads QQMSDTQPNTRT. Over residues 745–754 the composition is skewed to basic residues; sequence SKAKSKSKHK. Phosphoserine occurs at positions 757 and 769.

Belongs to the amino acid-polyamine-organocation (APC) superfamily. Cationic amino acid transporter (CAT) (TC 2.A.3.3) family.

Its subcellular location is the lysosome membrane. It carries out the reaction 4-aminobutanoate(in) = 4-aminobutanoate(out). In terms of biological role, imports 4-aminobutanoate (GABA) into lysosomes. May act as a GABA sensor that regulates mTORC2-dependent INS signaling and gluconeogenesis. The transport mechanism and substrate selectivity remain to be elucidated. This is Solute carrier family 7 member 14 from Bos taurus (Bovine).